The chain runs to 363 residues: Spermatogenesis-associated protein 22 (363 aa).

4 stretches are compositionally biased toward polar residues: residues 1–12, 30–48, 98–108, and 140–157; these read MKRSLNENSARS, QPLTSNPLKDDSGISTPSD, IQSNTGRSQGG, and NDGKNSCPVSSGAQQQKQ. 3 disordered regions span residues 1–51, 98–127, and 140–170; these read MKRS…DNYD, IQSNTGRSQGGWSYRDGNKNTSLKTWNKND, and NDGKNSCPVSSGAQQQKQLRIPEPPNLSRNK.

As to quaternary structure, component of a multiprotein complex with MEIOB and RPA2. Interacts with MEIOB. Interacts with the complex BRME1:HSF2BP:BRCA2. Highly expressed in adult testis.

It localises to the chromosome. Its function is as follows. Meiosis-specific protein required for homologous recombination in meiosis I. In Homo sapiens (Human), this protein is Spermatogenesis-associated protein 22.